We begin with the raw amino-acid sequence, 188 residues long: Translation machinery-associated protein 22 (188 aa).

The region spanning 96–167 (VTIKRIERNK…EIEEFLLEKY (72 aa)) is the SUI1 domain.

Belongs to the DENR family. Interacts with the 40S ribosomal subunit.

The protein localises to the cytoplasm. The protein is Translation machinery-associated protein 22 (TMA22) of Chaetomium globosum (strain ATCC 6205 / CBS 148.51 / DSM 1962 / NBRC 6347 / NRRL 1970) (Soil fungus).